The following is a 396-amino-acid chain: Subtelomeric hrmA-associated cluster protein AFUB_079040 (396 aa).

Disordered regions lie at residues 1-32 (MANKKKPSIKKSVNEPNPHLKQSHASGSQQSL) and 347-396 (YPEN…ECGR). The span at 23-32 (SHASGSQQSL) shows a compositional bias: polar residues. The span at 367-380 (SKKKKDKKKKKSNK) shows a compositional bias: basic residues.

Part of the subtelomeric hrmA-associated cluster (HAC) containing genes that alter the hyphal surface (such as reduced total chitin or increased beta-glucan exposure) and perturb inter-hyphal interactions within the developing biofilms, resulting in a loss of vertically aligned polarized growing filaments. Consequently, this hypoxia-typic morphotype (called H-MORPH) with altered biofilm architecture leads to increased hypoxia fitness, increased host inflammation, rapid disease progression, and mortality in a murine model of invasive aspergillosis. The sequence is that of Subtelomeric hrmA-associated cluster protein AFUB_079040 from Aspergillus fumigatus (strain CBS 144.89 / FGSC A1163 / CEA10) (Neosartorya fumigata).